The primary structure comprises 303 residues: Taste receptor type 2 member 13 (303 aa).

Over 1-7 (MESALPS) the chain is Extracellular. Residues 8–28 (IFTLVIIAEFIIGNLSNGFIV) traverse the membrane as a helical segment. Residues 29-55 (LINCIDWVSKRELSSVDKLLIILAISR) are Cytoplasmic-facing. The chain crosses the membrane as a helical span at residues 56–76 (IGLIWEILVSWFLALHSLAIF). Residues 77–85 (VSGTGLRIM) are Extracellular-facing. A helical transmembrane segment spans residues 86-106 (IFSWIVSNHFNLWLATILSIF). The Cytoplasmic portion of the chain corresponds to 107-128 (YLLKIASFSSPAFLYLKRRVNK). The chain crosses the membrane as a helical span at residues 129–149 (VILMILLGTLVFLFLNLIQIN). The Extracellular segment spans residues 150–184 (MLIKDWLDRYERNTTWNFSMSDFETFSVSVRFTMT). N-linked (GlcNAc...) asparagine glycosylation is found at Asn-162 and Asn-166. The chain crosses the membrane as a helical span at residues 185-205 (MFSLTPFTVAFISFLLLVFSL). At 206–232 (QKHLQKMQLNYKGHRDPRTKVHTNALK) the chain is on the cytoplasmic side. A helical transmembrane segment spans residues 233-253 (IVISFLLLYASFFLSILISWI). The Extracellular segment spans residues 254–261 (SELYQNTV). The helical transmembrane segment at 262–282 (IYMLCETIGAFYPSSHSFLLI) threads the bilayer. Topologically, residues 283-303 (LGNAKLRQAFLLVAAKVWAKR) are cytoplasmic.

The protein belongs to the G-protein coupled receptor T2R family.

It is found in the membrane. In terms of biological role, receptor that may play a role in the perception of bitterness and is gustducin-linked. May play a role in sensing the chemical composition of the gastrointestinal content. The activity of this receptor may stimulate alpha gustducin, mediate PLC-beta-2 activation and lead to the gating of TRPM5. The sequence is that of Taste receptor type 2 member 13 (TAS2R13) from Pan troglodytes (Chimpanzee).